The following is a 680-amino-acid chain: DNA-directed RNA polymerase subunit beta' (680 aa).

Residues cysteine 69, cysteine 71, cysteine 87, and cysteine 90 each coordinate Zn(2+). The Mg(2+) site is built by aspartate 489, aspartate 491, and aspartate 493.

This sequence belongs to the RNA polymerase beta' chain family. RpoC1 subfamily. In plastids the minimal PEP RNA polymerase catalytic core is composed of four subunits: alpha, beta, beta', and beta''. When a (nuclear-encoded) sigma factor is associated with the core the holoenzyme is formed, which can initiate transcription. It depends on Mg(2+) as a cofactor. Requires Zn(2+) as cofactor.

Its subcellular location is the plastid. The protein resides in the chloroplast. It carries out the reaction RNA(n) + a ribonucleoside 5'-triphosphate = RNA(n+1) + diphosphate. Its function is as follows. DNA-dependent RNA polymerase catalyzes the transcription of DNA into RNA using the four ribonucleoside triphosphates as substrates. This chain is DNA-directed RNA polymerase subunit beta', found in Nasturtium officinale (Watercress).